Reading from the N-terminus, the 133-residue chain is DNA-directed RNA polymerases I and III subunit RPAC2 (133 aa).

Met-1 is subject to N-acetylmethionine.

The protein belongs to the archaeal Rpo11/eukaryotic RPB11/RPC19 RNA polymerase subunit family. Component of the RNA polymerase I and RNA polymerase III complexes consisting of at least 13 and 17 subunits, respectively. Pol I complex consists of a ten-subunit catalytic core composed of POLR1A/RPA1, POLR1B/RPA2, POLR1C/RPAC1, POLR1D/RPAC2, POLR1H/RPA12, POLR2E/RPABC1, POLR2F/RPABC2, POLR2H/RPABC3, POLR2K/RPABC4 and POLR2L/RPABC5; a mobile stalk subunit POLR1F/RPA43 protruding from the core and additional subunits homologous to general transcription factors POLR1E/RPA49 and POLR1G/RPA34. Part of Pol I pre-initiation complex (PIC), in which Pol I core assembles with RRN3 and promoter-bound UTBF and SL1/TIF-IB complex. Pol III complex consists of a ten-subunit catalytic core composed of POLR3A/RPC1, POLR3B/RPC2, POLR1C/RPAC1, POLR1D/RPAC2, POLR3K/RPC10, POLR2E/RPABC1, POLR2F/RPABC2, POLR2H/RPABC3, POLR2K/RPABC4 and POLR2L/RPABC5; a mobile stalk composed of two subunits POLR3H/RPC8 and CRCP/RPC9, protruding from the core and functioning primarily in transcription initiation; and additional subunits homologous to general transcription factors of the RNA polymerase II machinery, POLR3C/RPC3-POLR3F/RPC6-POLR3G/RPC7 heterotrimer required for transcription initiation and POLR3D/RPC4-POLR3E/RPC5 heterodimer involved in both transcription initiation and termination.

The protein resides in the nucleus. It localises to the nucleolus. Functionally, DNA-dependent RNA polymerase catalyzes the transcription of DNA into RNA using the four ribonucleoside triphosphates as substrates. Common component of RNA polymerases I and III which synthesize ribosomal RNA precursors and short non-coding RNAs including 5S rRNA, snRNAs, tRNAs and miRNAs, respectively. This chain is DNA-directed RNA polymerases I and III subunit RPAC2, found in Homo sapiens (Human).